A 336-amino-acid chain; its full sequence is Protein SGT1 homolog (336 aa).

Alanine 2 carries the post-translational modification N-acetylalanine. TPR repeat units lie at residues 11–44, 45–78, and 79–112; these read SQRLFQSFSDALIDGDPQAALEELTKALEQNPDD, AQYYCQRAYCHILLGKYRDGIADVKKSLELNPNN, and CTALLRKGICEYHEKDYASALETFAEGQKLDSTD. The CS domain maps to 140–229; sequence QSKIKYDWYQ…PEAVRWEKLE (90 aa). At threonine 236 the chain carries Phosphothreonine. The 90-residue stretch at 247–336 folds into the SGS domain; sequence MYPSSSHYTR…PPDDMEWKQY (90 aa). A Phosphoserine modification is found at serine 252. Residue threonine 255 is modified to Phosphothreonine. Lysine 266 participates in a covalent cross-link: Glycyl lysine isopeptide (Lys-Gly) (interchain with G-Cter in SUMO1); alternate. Lysine 266 participates in a covalent cross-link: Glycyl lysine isopeptide (Lys-Gly) (interchain with G-Cter in SUMO2); alternate. Serine 302 carries the post-translational modification Phosphoserine.

It belongs to the SGT1 family. As to quaternary structure, probably associates with SCF (SKP1-CUL1-F-box protein) complex through interaction with SKP1. Interacts with S100A6. Interacts with HSP90. Phosphorylated at Ser-252 and Ser-302, dephosphorylation promotes nuclear translocation, most likely due to disruption of the SUGT1-HSP90 complex.

Its subcellular location is the cytoplasm. The protein resides in the nucleus. In terms of biological role, may play a role in ubiquitination and subsequent proteasomal degradation of target proteins. This Mus musculus (Mouse) protein is Protein SGT1 homolog.